Here is a 173-residue protein sequence, read N- to C-terminus: 6,7-dimethyl-8-ribityllumazine synthase (173 aa).

Residues F24, 58–60, and 82–84 each bind 5-amino-6-(D-ribitylamino)uracil; these read ALE and AVI. 87-88 provides a ligand contact to (2S)-2-hydroxy-3-oxobutyl phosphate; it reads ET. H90 (proton donor) is an active-site residue. Residue N115 coordinates 5-amino-6-(D-ribitylamino)uracil. Residue R129 participates in (2S)-2-hydroxy-3-oxobutyl phosphate binding. Residues 150–173 form a disordered region; sequence ALEPEEDDEDDEDEDFDDEEDDGR. A compositionally biased stretch (acidic residues) spans 152 to 173; sequence EPEEDDEDDEDEDFDDEEDDGR.

Belongs to the DMRL synthase family.

The catalysed reaction is (2S)-2-hydroxy-3-oxobutyl phosphate + 5-amino-6-(D-ribitylamino)uracil = 6,7-dimethyl-8-(1-D-ribityl)lumazine + phosphate + 2 H2O + H(+). It functions in the pathway cofactor biosynthesis; riboflavin biosynthesis; riboflavin from 2-hydroxy-3-oxobutyl phosphate and 5-amino-6-(D-ribitylamino)uracil: step 1/2. Functionally, catalyzes the formation of 6,7-dimethyl-8-ribityllumazine by condensation of 5-amino-6-(D-ribitylamino)uracil with 3,4-dihydroxy-2-butanone 4-phosphate. This is the penultimate step in the biosynthesis of riboflavin. In Bordetella pertussis (strain Tohama I / ATCC BAA-589 / NCTC 13251), this protein is 6,7-dimethyl-8-ribityllumazine synthase.